A 605-amino-acid polypeptide reads, in one-letter code: Dolichyl-diphosphooligosaccharide--protein glycosyltransferase subunit 1 (605 aa).

The first 22 residues, 1-22 (MEAPIVLLLLLWLALAPTPGSA), serve as a signal peptide directing secretion. Residues 23–437 (SSEAPPLVNE…FNKVLMLQEP (415 aa)) lie on the Lumenal side of the membrane. K185 carries the post-translational modification N6-acetyllysine. N297 carries N-linked (GlcNAc...) asparagine glycosylation. A helical transmembrane segment spans residues 438–455 (LLVVAAFYILFFTVIIYV). Residues 456 to 605 (RLDFSITKDP…TKIDHILDAL (150 aa)) lie on the Cytoplasmic side of the membrane. An N6-acetyllysine; alternate modification is found at K536. K536 is covalently cross-linked (Glycyl lysine isopeptide (Lys-Gly) (interchain with G-Cter in SUMO2); alternate).

This sequence belongs to the OST1 family. In terms of assembly, component of the oligosaccharyltransferase (OST) complex. OST exists in two different complex forms which contain common core subunits RPN1, RPN2, OST48, OST4, DAD1 and TMEM258, either STT3A or STT3B as catalytic subunits, and form-specific accessory subunits. STT3A complex assembly occurs through the formation of 3 subcomplexes. Subcomplex 1 contains RPN1 and TMEM258, subcomplex 2 contains the STT3A-specific subunits STT3A, DC2/OSTC, and KCP2 as well as the core subunit OST4, and subcomplex 3 contains RPN2, DAD1, and OST48. The STT3A complex can form stable complexes with the Sec61 complex or with both the Sec61 and TRAP complexes. Interacts with TMEM35A/NACHO. In terms of processing, ubiquitinated by the ECS(ASB11) complex. Post-translationally, ufmylated by UFL1 in response to endoplasmic reticulum stress, promoting reticulophagy of endoplasmic reticulum sheets. As to expression, expressed in all tissues tested.

It localises to the endoplasmic reticulum membrane. The protein operates within protein modification; protein glycosylation. In terms of biological role, subunit of the oligosaccharyl transferase (OST) complex that catalyzes the initial transfer of a defined glycan (Glc(3)Man(9)GlcNAc(2) in eukaryotes) from the lipid carrier dolichol-pyrophosphate to an asparagine residue within an Asn-X-Ser/Thr consensus motif in nascent polypeptide chains, the first step in protein N-glycosylation. N-glycosylation occurs cotranslationally and the complex associates with the Sec61 complex at the channel-forming translocon complex that mediates protein translocation across the endoplasmic reticulum (ER). All subunits are required for a maximal enzyme activity. In Rattus norvegicus (Rat), this protein is Dolichyl-diphosphooligosaccharide--protein glycosyltransferase subunit 1.